Consider the following 433-residue polypeptide: MVAIKRLATVDADFKAQMDALLAFEAAQDEGIERTVIGILADVKARGDAAVVEYSNKFDRLTASSMADLELSKAEMQKALDGLPADQRQALEAAAHRVRVYHEKQRMEGWSYTEADGTMLGQMITPLDRVGLYVPGGKAAYPSSVLMNAIPAKVAGVKELIMVVPTPGGEHNQLVLAAACLAGVDRVFTIGGAQAVGALAYGTEAVPQVDKIVGPGNAYVACAKRRVFGIVGIDMIAGPSEILVVADGSSDPDWVAMDLFSQAEHDELAQSILICTDAAYIDRVQASIEKLLPTMPRREVIETSLTNRGALILVRDLEEACAIANRVAPEHLELSLADPDPWVAKIHHAGAIFIGHYTSESLGDYCAGPNHVLPTSGSARFSSPLGVYDFQKRTSLIKVSKAGAQTLGKIASTLAHGEGLPAHAKSAEFRLEN.

NAD(+) contacts are provided by Y133, Q194, and N217. 3 residues coordinate substrate: S240, Q262, and H265. Residues Q262 and H265 each contribute to the Zn(2+) site. Catalysis depends on proton acceptor residues E330 and H331. H331, D364, E418, and H423 together coordinate substrate. D364 is a binding site for Zn(2+). Position 423 (H423) interacts with Zn(2+).

It belongs to the histidinol dehydrogenase family. Zn(2+) serves as cofactor.

The enzyme catalyses L-histidinol + 2 NAD(+) + H2O = L-histidine + 2 NADH + 3 H(+). Its pathway is amino-acid biosynthesis; L-histidine biosynthesis; L-histidine from 5-phospho-alpha-D-ribose 1-diphosphate: step 9/9. Catalyzes the sequential NAD-dependent oxidations of L-histidinol to L-histidinaldehyde and then to L-histidine. This chain is Histidinol dehydrogenase, found in Dechloromonas aromatica (strain RCB).